The chain runs to 686 residues: Pentatricopeptide repeat-containing protein 1, mitochondrial (686 aa).

The span at 55–67 (RMSSLCSDSSTPV) shows a compositional bias: polar residues. The tract at residues 55–79 (RMSSLCSDSSTPVAPQEEEEEESFG) is disordered. PPR repeat units follow at residues 124–160 (TPYW…RLQP), 161–195 (LECN…DLEP), 196–234 (SDAT…NFQL), 235–269 (NLKT…GHAV), and 270–306 (TEET…GIKP). Positions 383–407 (KLEGPPAFPEARETSRTQPEVETKA) are disordered. Positions 392-407 (EARETSRTQPEVETKA) are enriched in basic and acidic residues. PPR repeat units lie at residues 508-542 (DITF…GIVP) and 575-609 (NTHI…SVPV).

The protein belongs to the PTCD1 family. Associates with mitochondrial leucine tRNAs. Interacts with ELAC2.

The protein resides in the mitochondrion matrix. Mitochondrial protein implicated in negative regulation of leucine tRNA levels, as well as negative regulation of mitochondria-encoded proteins and COX activity. Also affects the 3'-processing of mitochondrial tRNAs. The polypeptide is Pentatricopeptide repeat-containing protein 1, mitochondrial (Ptcd1) (Rattus norvegicus (Rat)).